Reading from the N-terminus, the 542-residue chain is MSTSSNTSGECSPFSITDSIVVQATDDNADKILQEVDLSDPNIDKNDTFELRQQVSIKESPLYYLRDIPYSAYTSFQVSLIFLIVIYNGFLGPLAGNVFIPALPLLQKEFNVSETTINATVSVFMATFSISPLFWGALADKGGRKILYIISISLMVIINILLASVPKKIGSLIFLRIIQAFASSSVISLGAGTVADLTPPKDRGKAMAYFMLGPNLGPILAPIIAGLILLDNNNWRWLFGFLCIVSGLGLIMVILLLPETLRCIVGNGDRQWENWSQNENDMSTQPVDFSSPISRWSFVSDIGFLNPITQDSIFKGLYPHPPKFSVWTYLRIMTFPPVILTSIANALLFCTYYSISVTLSHFLATEYSYSNLKIGACYVCPGVCMLLGSQIGGHLSDSMRKSWKKENYNTEYPLEFRLILTVCGVLLAIGGSIGYGWCIQFHYHISAVLVFAGLMAFGLTWCNNTIMTYLSELLSLRVSSAIAVSSFFRNIAAAISSALIAKLCQKMGIGFCFLGLGLINLVSLFSILVLINNRNKWVKDSF.

Asn-6 and Asn-46 each carry an N-linked (GlcNAc...) asparagine glycan. A helical membrane pass occupies residues 80–100 (LIFLIVIYNGFLGPLAGNVFI). N-linked (GlcNAc...) asparagine glycans are attached at residues Asn-111 and Asn-118. Helical transmembrane passes span 119-139 (ATVS…GALA), 146-166 (ILYI…ASVP), 169-189 (IGSL…VISL), 210-230 (FMLG…LILL), and 237-257 (WLFG…ILLL). Asn-274 is a glycosylation site (N-linked (GlcNAc...) asparagine). The next 4 helical transmembrane spans lie at 332–352 (IMTF…FCTY), 374–394 (IGAC…IGGH), 419–439 (ILTV…GWCI), and 441–461 (FHYH…GLTW). The N-linked (GlcNAc...) asparagine glycan is linked to Asn-463. A run of 2 helical transmembrane segments spans residues 481–501 (AIAV…ALIA) and 511–531 (FCFL…LVLI).

The protein belongs to the major facilitator superfamily. CAR1 family.

Its subcellular location is the cell membrane. Plasma membrane acetic acid exporter, relieving the stress induced upon cells within hemocytes, and thus enabling increased proliferation and virulence against Galleria mellonella larvae. Confers resistance to weak acid and oxidative stress, but not to antifungal drugs. This Candida glabrata (strain ATCC 2001 / BCRC 20586 / JCM 3761 / NBRC 0622 / NRRL Y-65 / CBS 138) (Yeast) protein is Multidrug transporter DTR1.